Reading from the N-terminus, the 386-residue chain is Dual-specificity RNA methyltransferase RlmN (386 aa).

The active-site Proton acceptor is the glutamate 96. The Radical SAM core domain maps to 102–340 (ENDRATLCVS…VITRRTRGED (239 aa)). A disulfide bridge links cysteine 109 with cysteine 345. The [4Fe-4S] cluster site is built by cysteine 116, cysteine 120, and cysteine 123. S-adenosyl-L-methionine contacts are provided by residues 170–171 (GE), serine 202, 224–226 (SIH), and asparagine 302. Residue cysteine 345 is the S-methylcysteine intermediate of the active site.

This sequence belongs to the radical SAM superfamily. RlmN family. [4Fe-4S] cluster is required as a cofactor.

The protein localises to the cytoplasm. It catalyses the reaction adenosine(2503) in 23S rRNA + 2 reduced [2Fe-2S]-[ferredoxin] + 2 S-adenosyl-L-methionine = 2-methyladenosine(2503) in 23S rRNA + 5'-deoxyadenosine + L-methionine + 2 oxidized [2Fe-2S]-[ferredoxin] + S-adenosyl-L-homocysteine. The enzyme catalyses adenosine(37) in tRNA + 2 reduced [2Fe-2S]-[ferredoxin] + 2 S-adenosyl-L-methionine = 2-methyladenosine(37) in tRNA + 5'-deoxyadenosine + L-methionine + 2 oxidized [2Fe-2S]-[ferredoxin] + S-adenosyl-L-homocysteine. In terms of biological role, specifically methylates position 2 of adenine 2503 in 23S rRNA and position 2 of adenine 37 in tRNAs. m2A2503 modification seems to play a crucial role in the proofreading step occurring at the peptidyl transferase center and thus would serve to optimize ribosomal fidelity. The chain is Dual-specificity RNA methyltransferase RlmN from Colwellia psychrerythraea (strain 34H / ATCC BAA-681) (Vibrio psychroerythus).